The sequence spans 213 residues: MVNKLEQELTQKLEILLKQTALSISDQQKNKLVQLVLLLNKWNKAYNLTSVRDPMEMLIKHILDSVVVSPYLQGDLFIDVGTGPGLPGLPLAIINPDKNFVLLDSLGKRISFIRNAVRELELSNVVPVLSRVEEYIPDHKFDGILSRAFAILKDMTDWCHHLPNEKGLFYALKGVYQQEEVMDMSNNFQVIDVIKLHVPELIGERHLVKVKKM.

S-adenosyl-L-methionine-binding positions include Gly-81, Leu-86, 132–133, and Arg-147; that span reads VE.

This sequence belongs to the methyltransferase superfamily. RNA methyltransferase RsmG family.

It localises to the cytoplasm. It catalyses the reaction guanosine(527) in 16S rRNA + S-adenosyl-L-methionine = N(7)-methylguanosine(527) in 16S rRNA + S-adenosyl-L-homocysteine. Its function is as follows. Specifically methylates the N7 position of guanine in position 527 of 16S rRNA. This Mannheimia succiniciproducens (strain KCTC 0769BP / MBEL55E) protein is Ribosomal RNA small subunit methyltransferase G.